The primary structure comprises 92 residues: MTRSIKKGPFVADHLLKKIENLNLKKEKKIIITWSRASTIVPTMIGHTIAVHNGQEHLPIYITDRMVGHKLGEFAPTRTFRGHAKNDKKSRR.

This sequence belongs to the universal ribosomal protein uS19 family.

It is found in the plastid. The protein resides in the chloroplast. Functionally, protein S19 forms a complex with S13 that binds strongly to the 16S ribosomal RNA. This is Small ribosomal subunit protein uS19c (rps19) from Marchantia polymorpha (Common liverwort).